The following is a 383-amino-acid chain: 2-aminoethylphosphonate--pyruvate transaminase (383 aa).

Position 192 is an N6-(pyridoxal phosphate)lysine (Lys192).

It belongs to the class-V pyridoxal-phosphate-dependent aminotransferase family. PhnW subfamily. Homodimer. Pyridoxal 5'-phosphate serves as cofactor.

It carries out the reaction (2-aminoethyl)phosphonate + pyruvate = phosphonoacetaldehyde + L-alanine. Functionally, involved in phosphonate degradation. The polypeptide is 2-aminoethylphosphonate--pyruvate transaminase (Rhizobium meliloti (strain 1021) (Ensifer meliloti)).